Here is a 258-residue protein sequence, read N- to C-terminus: Snake venom serine protease catroxase-2 (258 aa).

The first 18 residues, 1 to 18 (MVLIRVLANLLILQLSYA), serve as a signal peptide directing secretion. Positions 19–24 (QKSSEL) are excised as a propeptide. The 225-residue stretch at 25–249 (VVGGDECNIN…YNDWIQSIIA (225 aa)) folds into the Peptidase S1 domain. Cystine bridges form between C31/C163, C50/C66, C98/C256, C142/C210, C174/C189, and C200/C225. Residue N44 is glycosylated (N-linked (GlcNAc...) asparagine). Active-site charge relay system residues include H65 and D110. Residue S204 is the Charge relay system of the active site.

This sequence belongs to the peptidase S1 family. Snake venom subfamily. As to quaternary structure, monomer. Expressed by the venom gland.

Its subcellular location is the secreted. In terms of biological role, snake venom serine protease that may act in the hemostasis system of the prey. This is Snake venom serine protease catroxase-2 from Crotalus atrox (Western diamondback rattlesnake).